A 1457-amino-acid polypeptide reads, in one-letter code: Bridge-like lipid transfer protein family member 3B (1457 aa).

Residues 3-94 (GIIKKQILKH…DKVIMEMSTC (92 aa)) form the Chorein N-terminal domain. Disordered regions lie at residues 267 to 295 (STEQ…KTPQ) and 409 to 449 (DRNL…PQPS). Residues 278-295 (PTQSSTVTSSAQHVKTPQ) are compositionally biased toward polar residues. Phosphoserine occurs at positions 414, 418, 774, and 934. Disordered stretches follow at residues 975-1038 (SEDE…TGKG), 1056-1099 (ASLS…LSVS), and 1145-1183 (SNTS…TQEN). The segment covering 980–995 (SGLSHKSGSGEMTSEG) has biased composition (polar residues). Position 1008 is a phosphoserine (S1008). The span at 1145–1180 (SNTSCQSPAESVNTSANTQTCGEASPEAVSTNSEGT) shows a compositional bias: polar residues. A coiled-coil region spans residues 1410 to 1455 (ANFLDITREQLMEENECLRQRLAQAKMELAEAHSARDELLHQMKRM).

As to quaternary structure, homodimer (via N-terminus). Associates with the Golgi-associated retrograde protein (GARP) complex. Interacts with GARP complex component VPS52. Interacts (via C-terminal coiled-coil domain) with STX6.

The protein resides in the cytoplasm. Its subcellular location is the cytosol. The protein localises to the early endosome. In terms of biological role, tube-forming lipid transport protein which mediates the transfer of lipids between membranes at organelle contact sites. Required for retrograde traffic of vesicle clusters in the early endocytic pathway to the Golgi complex. The protein is Bridge-like lipid transfer protein family member 3B (Bltp3b) of Mus musculus (Mouse).